The primary structure comprises 725 residues: MDGVLVILLSLVLLVLVALILAVAWLARTARGDRHYGAATRATRSSSGMAASVDALALDDDDGPAVRVLPPVRPAAEGERPAGDAPGAAYGESAAAPDAGLGSPAPRAPHHDAAAAPEPGAAIGGAPTPAAGSPADASDTGRIAETVDTGTVLAVAAVADTPSRVAATEDTSLEAPLRESALRESAPGESASVRRAAEREAAQIVARAEREAAERLARVEREAAEIRRRGEDEVASLRNQARAEAAADASRAEAAVRDAARVELEAARAEIATARTSFEEELRVRRAELRGREEALAAREQRVEERTAGLDEHASRLAGREQDLLDREDELAHRTAEAADDEAARQAALERIAELTAVQARAELVSTIEHEARREAALLVREIEARAEEEGEERARRIVTTAIQRVASDQTTESVVTVLHLPGDEMKGRIIGREGRNIRTFESVTGVNVLIDDTPEAVLLSCFDPVRREIGRITLAALVSDGRIHPHRIEEEYARAQVEVEERCVRAGEDALLETGISEMHPELVTLLGRLRYRTSYGQNVLAHLIESAHLAGIMAAELRMALPLAKRAALLHDLGKALTHEVEGSHALIGADVARRYGESEEVVHAIEAHHNEVAPRSLCAVLTQAADQISGGRPGARRDSLESYVKRLERIEQIAGDRPGVDRVFAMQAGREVRVMVVPEEVDDVAAHLLARDVARQIEDELTYPGQIRVTVVRETRAVGTAR.

Residues valine 4–alanine 24 traverse the membrane as a helical segment. 3 disordered regions span residues aspartate 62–threonine 140, valine 165–arginine 195, and glutamate 300–glutamate 321. Low complexity-rich tracts occupy residues aspartate 84 to glycine 100 and alanine 114 to alanine 137. Residues valine 415–aspartate 481 enclose the KH domain. The region spanning valine 541–glycine 634 is the HD domain.

The protein belongs to the RNase Y family.

It localises to the cell membrane. In terms of biological role, endoribonuclease that initiates mRNA decay. The protein is Ribonuclease Y of Frankia alni (strain DSM 45986 / CECT 9034 / ACN14a).